We begin with the raw amino-acid sequence, 207 residues long: Chloramphenicol acetyltransferase (207 aa).

Catalysis depends on His186, which acts as the Proton acceptor.

It belongs to the chloramphenicol acetyltransferase family. Homotrimer.

It catalyses the reaction chloramphenicol + acetyl-CoA = chloramphenicol 3-acetate + CoA. In terms of biological role, this enzyme is an effector of chloramphenicol resistance in bacteria. The chain is Chloramphenicol acetyltransferase (catP) from Clostridium perfringens.